Reading from the N-terminus, the 298-residue chain is Type II methyltransferase M.MjaIV (298 aa).

The enzyme catalyses a 2'-deoxyadenosine in DNA + S-adenosyl-L-methionine = an N(6)-methyl-2'-deoxyadenosine in DNA + S-adenosyl-L-homocysteine + H(+). Functionally, a methylase that recognizes the double-stranded sequence 5'-GTNNAC-3', methylates A-5 on both strands, and protects the DNA from cleavage by the MjaIV endonuclease. The polypeptide is Type II methyltransferase M.MjaIV (mjaIVMP) (Methanocaldococcus jannaschii (strain ATCC 43067 / DSM 2661 / JAL-1 / JCM 10045 / NBRC 100440) (Methanococcus jannaschii)).